Consider the following 232-residue polypeptide: LexA repressor (232 aa).

The segment at residues 26 to 46 (FDEMKDALDLRSKSGIHRLIT) is a DNA-binding region (H-T-H motif). Catalysis depends on for autocatalytic cleavage activity residues serine 153 and lysine 191.

This sequence belongs to the peptidase S24 family. Homodimer.

It carries out the reaction Hydrolysis of Ala-|-Gly bond in repressor LexA.. In terms of biological role, represses a number of genes involved in the response to DNA damage (SOS response), including recA and lexA. In the presence of single-stranded DNA, RecA interacts with LexA causing an autocatalytic cleavage which disrupts the DNA-binding part of LexA, leading to derepression of the SOS regulon and eventually DNA repair. This Bradyrhizobium sp. (strain BTAi1 / ATCC BAA-1182) protein is LexA repressor.